The following is a 611-amino-acid chain: UvrABC system protein C (611 aa).

In terms of domain architecture, GIY-YIG spans 6–84 (NNPGVYRMFN…IKRSRPRFNV (79 aa)). Positions 194–229 (QSVKDHLAAAMQAASADLDFEHAAVYRDRLAALSHV) constitute a UVR domain.

The protein belongs to the UvrC family. Interacts with UvrB in an incision complex.

Its subcellular location is the cytoplasm. Its function is as follows. The UvrABC repair system catalyzes the recognition and processing of DNA lesions. UvrC both incises the 5' and 3' sides of the lesion. The N-terminal half is responsible for the 3' incision and the C-terminal half is responsible for the 5' incision. The chain is UvrABC system protein C from Brucella suis biovar 1 (strain 1330).